Here is a 404-residue protein sequence, read N- to C-terminus: Probable tRNA sulfurtransferase (404 aa).

In terms of domain architecture, THUMP spans 60 to 165; that stretch reads QPIVEALKLV…DEAAYISYEE (106 aa). ATP is bound by residues 183-184, 208-209, arginine 265, glycine 287, and glutamine 296; these read ML and HF.

This sequence belongs to the ThiI family.

The protein resides in the cytoplasm. The catalysed reaction is [ThiI sulfur-carrier protein]-S-sulfanyl-L-cysteine + a uridine in tRNA + 2 reduced [2Fe-2S]-[ferredoxin] + ATP + H(+) = [ThiI sulfur-carrier protein]-L-cysteine + a 4-thiouridine in tRNA + 2 oxidized [2Fe-2S]-[ferredoxin] + AMP + diphosphate. It carries out the reaction [ThiS sulfur-carrier protein]-C-terminal Gly-Gly-AMP + S-sulfanyl-L-cysteinyl-[cysteine desulfurase] + AH2 = [ThiS sulfur-carrier protein]-C-terminal-Gly-aminoethanethioate + L-cysteinyl-[cysteine desulfurase] + A + AMP + 2 H(+). It participates in cofactor biosynthesis; thiamine diphosphate biosynthesis. Its function is as follows. Catalyzes the ATP-dependent transfer of a sulfur to tRNA to produce 4-thiouridine in position 8 of tRNAs, which functions as a near-UV photosensor. Also catalyzes the transfer of sulfur to the sulfur carrier protein ThiS, forming ThiS-thiocarboxylate. This is a step in the synthesis of thiazole, in the thiamine biosynthesis pathway. The sulfur is donated as persulfide by IscS. In Streptococcus pyogenes serotype M12 (strain MGAS2096), this protein is Probable tRNA sulfurtransferase.